The primary structure comprises 804 residues: SH3-containing GRB2-like protein 3-interacting protein 1 (804 aa).

3 disordered regions span residues 1–90 (MMEG…EESH), 124–181 (LSPS…GPPL), and 199–254 (IWGS…QSAT). Residues 16-34 (RKKEKDTDSTGSPDRDGIK) show a composition bias toward basic and acidic residues. Phosphoserine is present on residues Ser54, Ser80, Ser81, Ser83, Ser125, Ser127, Ser132, and Ser145. Thr156 and Thr158 each carry phosphothreonine. The residue at position 212 (Ser212) is a Phosphoserine. Residues 221–236 (TGTPPPLPPKNVPATP) are compositionally biased toward pro residues. Phosphothreonine is present on residues Thr223 and Thr235. Ser241, Ser263, Ser276, Ser292, and Ser295 each carry phosphoserine. The span at 289–309 (VHFSDTSPEHVTPELTPREKV) shows a compositional bias: basic and acidic residues. The segment at 289 to 500 (VHFSDTSPEH…LSAATTPTVE (212 aa)) is disordered. Residues Thr300 and Thr304 each carry the phosphothreonine modification. A compositionally biased stretch (pro residues) spans 322-346 (SPAPGPLGPPGPTGPPGPPGPPRNV). Ser348 bears the Phosphoserine mark. A compositionally biased stretch (basic and acidic residues) spans 354-369 (EVQKKVAEQTFIKDDY). Ser375 is modified (phosphoserine). Thr386 carries the phosphothreonine modification. The span at 413 to 432 (TSGASSPARPATPLLPCSST) shows a compositional bias: low complexity. Over residues 433–451 (TPPPPPPRPPSRPKLPPGK) the composition is skewed to pro residues. Composition is skewed to low complexity over residues 458 to 468 (SRPFSPPIHSS) and 475 to 498 (PLARAESTSSISSTNSLSAATTPT). Ser462 bears the Phosphoserine mark. Positions 535–803 (TLPVAAAFTE…RFAAGKYLAD (269 aa)) constitute an MHD domain. 4 interaction with DPF motifs-containing proteins regions span residues 537–543 (PVAAAFT), 569–571 (SFP), 643–646 (TYYN), and 789–794 (SLIKKR). Residues 625–804 (MPNLMTHLKK…FAAGKYLADN (180 aa)) form a necessary and sufficient to mediate interaction with CANX region.

As to quaternary structure, interacts with proteins essential or regulating the formation of functional clathrin-coated pits. Interacts with CANX. Interacts with AP2A1. Interacts with EPS15. Interacts with SH3GL3. Interacts with AMPH. Interacts with ITSN1 (via SH3 domains). Interacts with and REPS1.

It is found in the membrane. Its subcellular location is the clathrin-coated pit. Functionally, may function in clathrin-mediated endocytosis. Has both a membrane binding/tubulating activity and the ability to recruit proteins essential to the formation of functional clathrin-coated pits. Has a preference for membranes enriched in phosphatidylserine and phosphoinositides and is required for the endocytosis of the transferrin receptor. May also bind tubulin. May play a role in the regulation of energy homeostasis. The polypeptide is SH3-containing GRB2-like protein 3-interacting protein 1 (SGIP1) (Pongo abelii (Sumatran orangutan)).